The primary structure comprises 214 residues: U3 small nucleolar RNA-associated protein 16 (214 aa).

The span at 1 to 10 (MSNGHVKFDA) shows a compositional bias: basic and acidic residues. Residues 1 to 106 (MSNGHVKFDA…KSVNETEVTD (106 aa)) are disordered. Serine 16 carries the phosphoserine modification. Basic and acidic residues predominate over residues 22–41 (DRQDDVLVISKKDKEVHSSS). A compositionally biased stretch (acidic residues) spans 42-52 (DEESDDDDAPQ). Residues serine 45, serine 65, and serine 144 each carry the phosphoserine modification. Residues 54–75 (EGLHSGKSEVESQITQREEAIR) show a composition bias toward basic and acidic residues. Residues 182–214 (STTQDSKTLPPKKESSIIRSKDRWLNRKALNKG) form a disordered region. A compositionally biased stretch (basic and acidic residues) spans 192-206 (PKKESSIIRSKDRWL).

It belongs to the UTP16 family. As to quaternary structure, part of the small subunit (SSU) processome composed of at least 40 protein subunits and the RNA chaperone small nucleolar RNA (snoRNA) U3. Interacts with snoRNA U3. Interacts with MPP10.

The protein localises to the nucleus. It localises to the nucleolus. In terms of biological role, functions as part of the small subunit (SSU) processome, first precursor of the small eukaryotic ribosomal subunit that coordinates the first two steps of ribosome biogenesis in transcription of the primary transcript pre-RNA and pre-18S processing. During the assembly of the SSU processome in the nucleolus, many ribosome biogenesis factors, an RNA chaperone and ribosomal proteins associate with the nascent pre-rRNA and work in concert to generate RNA folding, modifications, rearrangements and cleavage as well as targeted degradation of pre-ribosomal RNA by the RNA exosome. Has a role in bud site selection maybe via the regulation of expression of bipolar budding components. This chain is U3 small nucleolar RNA-associated protein 16 (BUD21), found in Saccharomyces cerevisiae (strain ATCC 204508 / S288c) (Baker's yeast).